Consider the following 232-residue polypeptide: Small ribosomal subunit protein uS3 (232 aa).

The 69-residue stretch at 39 to 107 folds into the KH type-2 domain; sequence VRQFLIKELA…PAQINIAEVR (69 aa).

It belongs to the universal ribosomal protein uS3 family. In terms of assembly, part of the 30S ribosomal subunit. Forms a tight complex with proteins S10 and S14.

Its function is as follows. Binds the lower part of the 30S subunit head. Binds mRNA in the 70S ribosome, positioning it for translation. In Serratia proteamaculans (strain 568), this protein is Small ribosomal subunit protein uS3.